A 126-amino-acid polypeptide reads, in one-letter code: Holo-[acyl-carrier-protein] synthase (126 aa).

Residues Asp-8 and Glu-57 each contribute to the Mg(2+) site.

It belongs to the P-Pant transferase superfamily. AcpS family. It depends on Mg(2+) as a cofactor.

Its subcellular location is the cytoplasm. The enzyme catalyses apo-[ACP] + CoA = holo-[ACP] + adenosine 3',5'-bisphosphate + H(+). Transfers the 4'-phosphopantetheine moiety from coenzyme A to a Ser of acyl-carrier-protein. This Vibrio cholerae serotype O1 (strain ATCC 39315 / El Tor Inaba N16961) protein is Holo-[acyl-carrier-protein] synthase.